A 329-amino-acid polypeptide reads, in one-letter code: GDP-mannose transporter (329 aa).

Residues 1 to 13 (MSELKVDTGRLSH) lie on the Cytoplasmic side of the membrane. A helical transmembrane segment spans residues 14–34 (IANSGPMSILAYCASSILMTV). The Lumenal portion of the chain corresponds to 35-44 (TNKCVVGSDK). The chain crosses the membrane as a helical span at residues 45–65 (FNMLFVMLFAQSLVCVTALVL). At 66 to 79 (LKALGYVQYRPLNK) the chain is on the cytoplasmic side. A helical transmembrane segment spans residues 80-100 (VDVKNWLLISVLLVLMTYTSS). The Lumenal segment spans residues 101–109 (RALKYLAVP). A helical membrane pass occupies residues 110–130 (IYTIFKNLTIILIAYGEVLFF). Topologically, residues 131 to 133 (GGR) are cytoplasmic. Residues 134 to 154 (VTAMELSSFLLIVLSSVVATL) form a helical membrane-spanning segment. The Lumenal segment spans residues 155-174 (GDQQALAKKPLAAAVESILG). Residues 175–195 (LNVGYFWMFTNCICSALFVLI) form a helical membrane-spanning segment. The Cytoplasmic portion of the chain corresponds to 196 to 214 (MRKRIALTKFKDFDTMFYN). A helical transmembrane segment spans residues 215–235 (NILSLPLLMLASFMFEDWGAA). Topologically, residues 236–245 (NIARNLTKDY) are lumenal. N240 carries N-linked (GlcNAc...) asparagine glycosylation. Residues 246–266 (IIIMIISGLASVGISYCSGWC) form a helical membrane-spanning segment. The Cytoplasmic portion of the chain corresponds to 267-273 (VRVTSST). Residues 274–294 (TYSMVGALNKLPIALSGLLFF) form a helical membrane-spanning segment. Residues 295–298 (DAPK) lie on the Lumenal side of the membrane. A helical transmembrane segment spans residues 299–319 (NFLSIFSIFLGFLSGIVYAVA). Residues 320–329 (KQKKQSQPAN) lie on the Cytoplasmic side of the membrane.

Belongs to the TPT transporter family. SLC35D subfamily. As to quaternary structure, homooligomer.

The protein resides in the golgi apparatus membrane. It is found in the cytoplasmic vesicle membrane. The protein localises to the endoplasmic reticulum membrane. Functionally, involved in the import of GDP-mannose from the cytoplasm into the Golgi lumen. The chain is GDP-mannose transporter (VRG4) from Eremothecium gossypii (strain ATCC 10895 / CBS 109.51 / FGSC 9923 / NRRL Y-1056) (Yeast).